Here is a 106-residue protein sequence, read N- to C-terminus: Large ribosomal subunit protein uL24 (106 aa).

This sequence belongs to the universal ribosomal protein uL24 family. As to quaternary structure, part of the 50S ribosomal subunit.

In terms of biological role, one of two assembly initiator proteins, it binds directly to the 5'-end of the 23S rRNA, where it nucleates assembly of the 50S subunit. One of the proteins that surrounds the polypeptide exit tunnel on the outside of the subunit. The sequence is that of Large ribosomal subunit protein uL24 from Laribacter hongkongensis (strain HLHK9).